Reading from the N-terminus, the 349-residue chain is MVRAKRKLDHIEYALSTGQSRTHGFHDIEFVHQSLPNSSYETITCETKIGELSLSSPIFINAMTGGGGEKTLHINEQLAYVAKHHNLAMAVGSQMAALKDESEAASYKIIRKVNPNGIFFANLGSEATVEQAERAVDMVGANALQIHLNVIQELTMPEGDRDFTGVLQRIEKIVLNSKVPVIVKEVGFGMSKETMQQLASVGVTAIDIGGQGGTNFAAVENERRQRMLSYFNNWGIQTATSIIEATSTNNNLSFIASGGIQTALDVAKAIALGANTTAFAGYFLRILMEDGIEKLVDEIDLLHTDLKFIMTALGAKTIEELQSVPLVIKGETYHWLTQRGIDTTHYSRR.

6–7 (RK) lines the substrate pocket. FMN is bound by residues 62 to 64 (AMT), Ser93, and Asn122. Substrate is bound at residue Gln152. Glu153 contacts Mg(2+). Residues Lys184, Thr214, 258 to 259 (GG), and 280 to 281 (AG) each bind FMN.

This sequence belongs to the IPP isomerase type 2 family. Homooctamer. Dimer of tetramers. It depends on FMN as a cofactor. The cofactor is NADPH. Mg(2+) is required as a cofactor.

It is found in the cytoplasm. It catalyses the reaction isopentenyl diphosphate = dimethylallyl diphosphate. In terms of biological role, involved in the biosynthesis of isoprenoids. Catalyzes the 1,3-allylic rearrangement of the homoallylic substrate isopentenyl (IPP) to its allylic isomer, dimethylallyl diphosphate (DMAPP). The polypeptide is Isopentenyl-diphosphate delta-isomerase (Bacillus cereus (strain AH820)).